The chain runs to 432 residues: Metacaspase-1 (432 aa).

Basic residues predominate over residues 1–11 (MEVMDHHHHTS). Disordered stretches follow at residues 1 to 21 (MEVM…TTRR) and 41 to 87 (PQPG…PNAP). Residues 12-21 (STRPNPTTRR) are compositionally biased toward low complexity. Pro residues predominate over residues 46–74 (GAPPPQGGYGYPQPPPPQQPYGYSQPPPQ). Residues H223 and C279 contribute to the active site.

Belongs to the peptidase C14B family.

In terms of biological role, involved in cell death (apoptosis). This chain is Metacaspase-1 (casA), found in Sclerotinia sclerotiorum (strain ATCC 18683 / 1980 / Ss-1) (White mold).